Here is a 128-residue protein sequence, read N- to C-terminus: Gastrotropin (128 aa).

Position 2 is an N-acetylalanine (A2).

It belongs to the calycin superfamily. Fatty-acid binding protein (FABP) family. Found exclusively in the ileum and to a lesser extent in distal jejunum.

It is found in the cytoplasm. Its subcellular location is the membrane. Functionally, binds to bile acids and is involved in enterohepatic bile acid metabolism. Required for efficient apical to basolateral transport of conjugated bile acids in ileal enterocytes. Stimulates gastric acid and pepsinogen secretion. This is Gastrotropin (FABP6) from Sus scrofa (Pig).